We begin with the raw amino-acid sequence, 362 residues long: Phosphoserine aminotransferase (362 aa).

R42 contacts L-glutamate. Pyridoxal 5'-phosphate contacts are provided by residues 76–77, W102, T153, D174, and Q197; that span reads AR. Position 198 is an N6-(pyridoxal phosphate)lysine (K198). 239–240 provides a ligand contact to pyridoxal 5'-phosphate; that stretch reads NT.

Belongs to the class-V pyridoxal-phosphate-dependent aminotransferase family. SerC subfamily. As to quaternary structure, homodimer. Pyridoxal 5'-phosphate serves as cofactor.

It localises to the cytoplasm. It carries out the reaction O-phospho-L-serine + 2-oxoglutarate = 3-phosphooxypyruvate + L-glutamate. It catalyses the reaction 4-(phosphooxy)-L-threonine + 2-oxoglutarate = (R)-3-hydroxy-2-oxo-4-phosphooxybutanoate + L-glutamate. It functions in the pathway amino-acid biosynthesis; L-serine biosynthesis; L-serine from 3-phospho-D-glycerate: step 2/3. The protein operates within cofactor biosynthesis; pyridoxine 5'-phosphate biosynthesis; pyridoxine 5'-phosphate from D-erythrose 4-phosphate: step 3/5. Catalyzes the reversible conversion of 3-phosphohydroxypyruvate to phosphoserine and of 3-hydroxy-2-oxo-4-phosphonooxybutanoate to phosphohydroxythreonine. In Proteus mirabilis (strain HI4320), this protein is Phosphoserine aminotransferase.